Here is a 364-residue protein sequence, read N- to C-terminus: Aminomethyltransferase (364 aa).

The protein belongs to the GcvT family. As to quaternary structure, the glycine cleavage system is composed of four proteins: P, T, L and H.

The catalysed reaction is N(6)-[(R)-S(8)-aminomethyldihydrolipoyl]-L-lysyl-[protein] + (6S)-5,6,7,8-tetrahydrofolate = N(6)-[(R)-dihydrolipoyl]-L-lysyl-[protein] + (6R)-5,10-methylene-5,6,7,8-tetrahydrofolate + NH4(+). The glycine cleavage system catalyzes the degradation of glycine. The chain is Aminomethyltransferase from Salmonella arizonae (strain ATCC BAA-731 / CDC346-86 / RSK2980).